The sequence spans 215 residues: Protein transport protein sec22 (215 aa).

At Met-1–Gln-194 the chain is on the cytoplasmic side. Residues Arg-9–Met-118 form the Longin domain. The v-SNARE coiled-coil homology domain occupies Asn-133 to Arg-193. Residues Tyr-195–Ala-215 form a helical; Anchor for type IV membrane protein membrane-spanning segment.

It belongs to the synaptobrevin family. Component of two distinct SNARE complexes consisting of sed5, bos1, bet1 and sec22 or ufe1, use1, sec20 and sec22. Ykt6 can probably replace sec22 as subunit of either complex.

It is found in the membrane. The protein localises to the endoplasmic reticulum membrane. The protein resides in the golgi apparatus membrane. Nonessential SNARE involved in targeting and fusion of ER-derived transport vesicles with the Golgi complex as well as Golgi-derived retrograde transport vesicles with the ER. The polypeptide is Protein transport protein sec22 (sec22) (Schizosaccharomyces pombe (strain 972 / ATCC 24843) (Fission yeast)).